The sequence spans 153 residues: Large ribosomal subunit protein uL15 (153 aa).

It belongs to the universal ribosomal protein uL15 family. In terms of assembly, part of the 50S ribosomal subunit.

Its function is as follows. Binds to the 23S rRNA. This is Large ribosomal subunit protein uL15 from Pelagibacter ubique (strain HTCC1062).